The primary structure comprises 380 residues: Carbamoyl phosphate synthase small chain (380 aa).

A CPSase region spans residues 1–187 (MTTSTRGAAK…VVPAIGAKRF (187 aa)). Positions 55, 236, and 238 each coordinate L-glutamine. Residues 188–380 (TVAAVDLGIK…FVSLMEGQRA (193 aa)) enclose the Glutamine amidotransferase type-1 domain. C264 functions as the Nucleophile in the catalytic mechanism. F265, Q268, N306, G308, and F309 together coordinate L-glutamine. Active-site residues include H354 and E356.

It belongs to the CarA family. In terms of assembly, composed of two chains; the small (or glutamine) chain promotes the hydrolysis of glutamine to ammonia, which is used by the large (or ammonia) chain to synthesize carbamoyl phosphate. Tetramer of heterodimers (alpha,beta)4.

The catalysed reaction is hydrogencarbonate + L-glutamine + 2 ATP + H2O = carbamoyl phosphate + L-glutamate + 2 ADP + phosphate + 2 H(+). It catalyses the reaction L-glutamine + H2O = L-glutamate + NH4(+). The protein operates within amino-acid biosynthesis; L-arginine biosynthesis; carbamoyl phosphate from bicarbonate: step 1/1. It functions in the pathway pyrimidine metabolism; UMP biosynthesis via de novo pathway; (S)-dihydroorotate from bicarbonate: step 1/3. Its function is as follows. Small subunit of the glutamine-dependent carbamoyl phosphate synthetase (CPSase). CPSase catalyzes the formation of carbamoyl phosphate from the ammonia moiety of glutamine, carbonate, and phosphate donated by ATP, constituting the first step of 2 biosynthetic pathways, one leading to arginine and/or urea and the other to pyrimidine nucleotides. The small subunit (glutamine amidotransferase) binds and cleaves glutamine to supply the large subunit with the substrate ammonia. The chain is Carbamoyl phosphate synthase small chain from Streptomyces avermitilis (strain ATCC 31267 / DSM 46492 / JCM 5070 / NBRC 14893 / NCIMB 12804 / NRRL 8165 / MA-4680).